A 485-amino-acid chain; its full sequence is Rop guanine nucleotide exchange factor 2 (485 aa).

Residues 1 to 36 (MENLPNHEENDDVGYHQSPGPIDPNDHSASETPVYS) are disordered. The 379-residue stretch at 107–485 (LAVQEISEPE…YVDKTMRGEE (379 aa)) folds into the PRONE domain.

Interacts with ARC10/ROP11. As to expression, expressed in the vascular tissues of roots, leaves, sepals, petals and siliques.

In terms of biological role, guanine-nucleotide exchange factor (GEF) that acts as an activator of Rop (Rho of plants) GTPases by promoting the exchange of GDP for GTP. This Arabidopsis thaliana (Mouse-ear cress) protein is Rop guanine nucleotide exchange factor 2 (ROPGEF2).